A 243-amino-acid polypeptide reads, in one-letter code: Ubiquinone/menaquinone biosynthesis C-methyltransferase UbiE (243 aa).

S-adenosyl-L-methionine is bound by residues Thr69, Asp90, and 116–117; that span reads DA.

It belongs to the class I-like SAM-binding methyltransferase superfamily. MenG/UbiE family.

It carries out the reaction a 2-demethylmenaquinol + S-adenosyl-L-methionine = a menaquinol + S-adenosyl-L-homocysteine + H(+). The catalysed reaction is a 2-methoxy-6-(all-trans-polyprenyl)benzene-1,4-diol + S-adenosyl-L-methionine = a 5-methoxy-2-methyl-3-(all-trans-polyprenyl)benzene-1,4-diol + S-adenosyl-L-homocysteine + H(+). It functions in the pathway quinol/quinone metabolism; menaquinone biosynthesis; menaquinol from 1,4-dihydroxy-2-naphthoate: step 2/2. Its pathway is cofactor biosynthesis; ubiquinone biosynthesis. Functionally, methyltransferase required for the conversion of demethylmenaquinol (DMKH2) to menaquinol (MKH2) and the conversion of 2-polyprenyl-6-methoxy-1,4-benzoquinol (DDMQH2) to 2-polyprenyl-3-methyl-6-methoxy-1,4-benzoquinol (DMQH2). This is Ubiquinone/menaquinone biosynthesis C-methyltransferase UbiE from Burkholderia vietnamiensis (strain G4 / LMG 22486) (Burkholderia cepacia (strain R1808)).